Reading from the N-terminus, the 348-residue chain is Elongation factor Ts (348 aa).

The involved in Mg(2+) ion dislocation from EF-Tu stretch occupies residues 80-83 (TDFV).

The protein belongs to the EF-Ts family.

It localises to the cytoplasm. In terms of biological role, associates with the EF-Tu.GDP complex and induces the exchange of GDP to GTP. It remains bound to the aminoacyl-tRNA.EF-Tu.GTP complex up to the GTP hydrolysis stage on the ribosome. This Streptococcus mutans serotype c (strain ATCC 700610 / UA159) protein is Elongation factor Ts.